We begin with the raw amino-acid sequence, 264 residues long: MVTMKDLLECGVHFGHQTRRWNPKTKKFIFGVRKNIHIIDLQKTLRYFRYTYNIVRDASAQGKSIMFVGTKKQANETLKEFAESIQVPYVNYRWLGGMLTNFSTIRKSVRKLEIIEEMENSGQIDLLTKKEKLMILRKKEKLDKYLGGVRHMKKIPDMIFVIDVAKEKIAVAEARKLHIPIVAPLDTNCDPDLVDYPIPGNDDAIRSIRLFCKEMSEAILEGRELMQEEIVHADENSEEIEYVSNEEKEEMLAEIQKEITQGAE.

Belongs to the universal ribosomal protein uS2 family.

This Helicobacter pylori (strain Shi470) protein is Small ribosomal subunit protein uS2.